A 614-amino-acid polypeptide reads, in one-letter code: Baeyer-Villiger monooxygenase peniC (614 aa).

FAD is bound by residues Glu-99, 107 to 110 (TWHW), Asp-119, and Tyr-125. NADP(+)-binding positions include 255–261 (TGASGVQ), 278–279 (RT), and 398–399 (KR).

It belongs to the FAD-binding monooxygenase family. FAD serves as cofactor.

It catalyses the reaction gamma-lactone-2-keto[5.5.5.5]fenestrane + NADPH + O2 + H(+) = penifulvin A + NADP(+) + H2O. Its pathway is secondary metabolite biosynthesis; terpenoid biosynthesis. Its function is as follows. Baeyer-Villiger monooxygenase; part of the gene cluster that mediates the biosynthesis of penifulvin A, a potent insecticidal sesquiterpene that features a [5.5.5.6]dioxafenestrane ring. Within the pathway, peniC is responsible for the final regioselective Baeyer-Villiger oxidation of gamma-lactone-2-keto[5.5.5.5]fenestran between C1 and C2 to form the delta-lactone moiety of penifulvin A. The first step of the pathway is performed by the sesquiterpene cyclase peniA that generates the angular triquinane scaffold silphinene via cyclization of the linear farnesyl pyrophosphate (FPP). The cytochrome P450 monooxygenase peniB and the flavin-dependent monooxygenase peniC then catalyze a series of oxidation reactions to transform silphinene into penifulvin A. In Penicillium patulum (Penicillium griseofulvum), this protein is Baeyer-Villiger monooxygenase peniC.